The following is a 109-amino-acid chain: Period circadian protein (109 aa).

Polar residues-rich tracts occupy residues 42–56 (QSYS…NLSP) and 68–80 (SSRN…NLNM). The tract at residues 42–109 (QSYSTPANTG…LVTLTESLLK (68 aa)) is disordered. The segment covering 81 to 97 (GSVTNTSNTGTGTSSGS) has biased composition (low complexity).

In terms of assembly, forms a heterodimer with timeless (TIM); the complex then translocates into the nucleus. Phosphorylated with a circadian rhythmicity, probably by the double-time protein (dbt). Phosphorylation could be implicated in the stability of per monomer and in the formation of heterodimer per-tim.

The protein localises to the nucleus. The protein resides in the cytoplasm. It is found in the perinuclear region. Essential for biological clock functions. Determines the period length of circadian and ultradian rhythms; an increase in PER dosage leads to shortened circadian rhythms and a decrease leads to lengthened circadian rhythms. Essential for the circadian rhythmicity of locomotor activity, eclosion behavior, and for the rhythmic component of the male courtship song that originates in the thoracic nervous system. The biological cycle depends on the rhythmic formation and nuclear localization of the TIM-PER complex. Light induces the degradation of TIM, which promotes elimination of PER. Nuclear activity of the heterodimer coordinatively regulates PER and TIM transcription through a negative feedback loop. Behaves as a negative element in circadian transcriptional loop. Does not appear to bind DNA, suggesting indirect transcriptional inhibition. This is Period circadian protein (per) from Musca domestica (House fly).